We begin with the raw amino-acid sequence, 1337 residues long: ATP-dependent helicase/nuclease subunit A (1337 aa).

The UvrD-like helicase ATP-binding domain occupies phenylalanine 3–arginine 484. Residue alanine 24–threonine 31 coordinates ATP. Residues alanine 522–glycine 867 enclose the UvrD-like helicase C-terminal domain.

The protein belongs to the helicase family. AddA subfamily. As to quaternary structure, heterodimer of AddA and AddB/RexB. Mg(2+) serves as cofactor.

The catalysed reaction is Couples ATP hydrolysis with the unwinding of duplex DNA by translocating in the 3'-5' direction.. It catalyses the reaction ATP + H2O = ADP + phosphate + H(+). The heterodimer acts as both an ATP-dependent DNA helicase and an ATP-dependent, dual-direction single-stranded exonuclease. Recognizes the chi site generating a DNA molecule suitable for the initiation of homologous recombination. The AddA nuclease domain is required for chi fragment generation; this subunit has the helicase and 3' -&gt; 5' nuclease activities. This is ATP-dependent helicase/nuclease subunit A from Limosilactobacillus fermentum (strain NBRC 3956 / LMG 18251) (Lactobacillus fermentum).